Reading from the N-terminus, the 944-residue chain is Tyrosine-protein kinase transmembrane receptor ROR2 (944 aa).

The N-terminal stretch at 1 to 33 is a signal peptide; that stretch reads MARGWVRPSRVPLCARAVWTAAALLLWTPWTAG. Topologically, residues 34–403 are extracellular; sequence EVEDSEAIDT…CSPRDGSKMG (370 aa). The region spanning 55–145 is the Ig-like C2-type domain; it reads PTLKGYFLNF…VATNGLKTIT (91 aa). N-linked (GlcNAc...) asparagine glycosylation occurs at Asn-70. Intrachain disulfides connect Cys-83-Cys-135, Cys-174-Cys-239, Cys-182-Cys-232, Cys-223-Cys-264, Cys-252-Cys-300, Cys-256-Cys-286, Cys-316-Cys-394, Cys-337-Cys-377, and Cys-365-Cys-389. Residues 169–303 form the FZ domain; that stretch reads QEDGFCQPYR…SPDAANCMRI (135 aa). The N-linked (GlcNAc...) asparagine glycan is linked to Asn-188. In terms of domain architecture, Kringle spans 316-394; the sequence is CYNGSGADYR…RVELCDVPPC (79 aa). Asn-318 is a glycosylation site (N-linked (GlcNAc...) asparagine). Residues 404 to 424 traverse the membrane as a helical segment; the sequence is ILYILVPSIAIPLVIACLFFL. Residues 425 to 944 are Cytoplasmic-facing; the sequence is VCMCRNKQKA…TEAAHVQLEA (520 aa). In terms of domain architecture, Protein kinase spans 473–746; that stretch reads VRFMEELGED…PRFKDIHSRL (274 aa). ATP contacts are provided by residues 479–487 and Lys-507; that span reads LGEDRFGKV. The Proton acceptor role is filled by Asp-615. Position 646 is a phosphotyrosine; by autocatalysis (Tyr-646). The tract at residues 757–779 is disordered; it reads SSAQTSGASNTTQTSSLSTSPVS. Positions 765 to 779 are enriched in low complexity; it reads SNTTQTSSLSTSPVS. Residue Arg-785 is modified to Asymmetric dimethylarginine. 2 disordered regions span residues 850–879 and 898–929; these read QVPP…TAPS and QNIA…LGDN. Residues 857 to 872 show a composition bias toward low complexity; the sequence is PKPSSHHSGSGSTSTG.

This sequence belongs to the protein kinase superfamily. Tyr protein kinase family. ROR subfamily. As to quaternary structure, homodimer; promotes osteogenesis. Binds YWHAB. Interacts with WTIP. Interacts with ROR2. Requires Mg(2+) as cofactor.

The protein resides in the cell membrane. It catalyses the reaction L-tyrosyl-[protein] + ATP = O-phospho-L-tyrosyl-[protein] + ADP + H(+). Functionally, tyrosine-protein kinase receptor which may be involved in the early formation of the chondrocytes. It seems to be required for cartilage and growth plate development. Phosphorylates YWHAB, leading to induction of osteogenesis and bone formation. In contrast, has also been shown to have very little tyrosine kinase activity in vitro. May act as a receptor for wnt ligand WNT5A which may result in the inhibition of WNT3A-mediated signaling. The chain is Tyrosine-protein kinase transmembrane receptor ROR2 (Ror2) from Mus musculus (Mouse).